A 187-amino-acid chain; its full sequence is Resolvase OPG149 (187 aa).

It belongs to the RuvC family. Poxviruses-type subfamily. Mg(2+) serves as cofactor.

In terms of biological role, plays a role in DNA replication by cleaving viral DNA concatamers to yield unit-length viral genomes. The concatamer junctions contain inverted repeat sequences that can be extruded as cruciforms, yielding Holliday junctions that A22 protein cleaves. The chain is Resolvase OPG149 (OPG149) from Vaccinia virus (strain Western Reserve) (VACV).